The primary structure comprises 342 residues: Manganese-dependent ADP-ribose/CDP-alcohol diphosphatase (342 aa).

Residues aspartate 18, glutamine 20, aspartate 67, asparagine 103, histidine 239, histidine 276, and histidine 278 each coordinate Zn(2+).

Belongs to the ADPRibase-Mn family. In terms of assembly, monomer. Mg(2+) serves as cofactor.

It carries out the reaction CDP-choline + H2O = phosphocholine + CMP + 2 H(+). The enzyme catalyses ADP-D-ribose + H2O = D-ribose 5-phosphate + AMP + 2 H(+). The catalysed reaction is CDP-glycerol + H2O = sn-glycerol 3-phosphate + CMP + 2 H(+). Its function is as follows. Hydrolyzes ADP-ribose, IDP-ribose, CDP-glycerol, CDP-choline and CDP-ethanolamine, but not other non-reducing ADP-sugars or CDP-glucose. This is Manganese-dependent ADP-ribose/CDP-alcohol diphosphatase (adprm) from Xenopus tropicalis (Western clawed frog).